The sequence spans 177 residues: Large ribosomal subunit protein uL6 (177 aa).

The protein belongs to the universal ribosomal protein uL6 family. As to quaternary structure, part of the 50S ribosomal subunit.

In terms of biological role, this protein binds to the 23S rRNA, and is important in its secondary structure. It is located near the subunit interface in the base of the L7/L12 stalk, and near the tRNA binding site of the peptidyltransferase center. The polypeptide is Large ribosomal subunit protein uL6 (Cupriavidus pinatubonensis (strain JMP 134 / LMG 1197) (Cupriavidus necator (strain JMP 134))).